Here is a 419-residue protein sequence, read N- to C-terminus: Gamma-glutamyl phosphate reductase (419 aa).

Belongs to the gamma-glutamyl phosphate reductase family.

It is found in the cytoplasm. The catalysed reaction is L-glutamate 5-semialdehyde + phosphate + NADP(+) = L-glutamyl 5-phosphate + NADPH + H(+). The protein operates within amino-acid biosynthesis; L-proline biosynthesis; L-glutamate 5-semialdehyde from L-glutamate: step 2/2. Its function is as follows. Catalyzes the NADPH-dependent reduction of L-glutamate 5-phosphate into L-glutamate 5-semialdehyde and phosphate. The product spontaneously undergoes cyclization to form 1-pyrroline-5-carboxylate. The protein is Gamma-glutamyl phosphate reductase of Gloeobacter violaceus (strain ATCC 29082 / PCC 7421).